Consider the following 421-residue polypeptide: Leucine-rich repeat-containing protein 42 (421 aa).

LRR repeat units follow at residues 149–170 (VLCSLCLRNRYLVVAEKLEEIK), 174–195 (ELTRLDLSCCWLGDEHELLEHL), 202–222 (SVTQLHLKDNCLSDAGIRKMT), 234–255 (NLTLLDLSCNPEITDAGIGYLF), and 259–280 (KLNCLDISGTGLKDIKAVKDKL). Residues 374–406 (HEPLLSQESKKSKKRAFEESEQEQSSPQSAKQK) form a disordered region. At Ser-399 the chain carries Phosphoserine.

This sequence belongs to the LRRC42 family.

The chain is Leucine-rich repeat-containing protein 42 (Lrrc42) from Rattus norvegicus (Rat).